The chain runs to 502 residues: MTEKKYIVALDQGTTSSRAVVMDHDANIISVSQREFEQIYPKPGWVEHDPMEIWATQSSTLVEVLAKADISADQIAAIGITNQRETTIVWEKETGKPIYNAIVWQCRRTAEICEHLKRDGLEDYIRSNTGLVIDPYFSGTKVKWILDHVEGSRERARRGELLFGTVDTWLIWKMTQGRVHVTDYTNASRTMLFNIHTLDWDDKMLEVLDIPREMLPEVRRSSEVYGQTNIGGKGGTRIPISGIAGDQQAALFGQLCVKEGMAKNTYGTGCFMLMNTGEKAVKSENGLLTTIACGPTGEVNYALEGAVFMAGASIQWLRDEMKLINDAYDSEYFATKVQNTNGVYVVPAFTGLGAPYWDPYARGAIFGLTRGVNANHIIRATLESIAYQTRDVLEAMQADSGIRLHALRVDGGAVANNFLMQFQSDILGTRVERPEVREVTALGAAYLAGLAVGFWQNLDELQEKAVIEREFRPGIETTERNYRYAGWKKAVKRAMAWEEHDE.

Position 14 (threonine 14) interacts with ADP. Residues threonine 14, threonine 15, and serine 16 each contribute to the ATP site. Threonine 14 contributes to the sn-glycerol 3-phosphate binding site. Arginine 18 serves as a coordination point for ADP. The sn-glycerol 3-phosphate site is built by arginine 84, glutamate 85, tyrosine 136, and aspartate 246. Positions 84, 85, 136, 246, and 247 each coordinate glycerol. ADP-binding residues include threonine 268 and glycine 311. Threonine 268, glycine 311, glutamine 315, and glycine 412 together coordinate ATP. Positions 412 and 416 each coordinate ADP.

This sequence belongs to the FGGY kinase family. Homotetramer and homodimer (in equilibrium). Heterodimer with EIIA-Glc. Binds 1 zinc ion per glycerol kinase EIIA-Glc dimer. The zinc ion is important for dimerization.

It carries out the reaction glycerol + ATP = sn-glycerol 3-phosphate + ADP + H(+). The protein operates within polyol metabolism; glycerol degradation via glycerol kinase pathway; sn-glycerol 3-phosphate from glycerol: step 1/1. With respect to regulation, activity of this regulatory enzyme is affected by several metabolites. Allosterically and non-competitively inhibited by fructose 1,6-bisphosphate (FBP) and unphosphorylated phosphocarrier protein EIIA-Glc (III-Glc), an integral component of the bacterial phosphotransferase (PTS) system. Key enzyme in the regulation of glycerol uptake and metabolism. Catalyzes the phosphorylation of glycerol to yield sn-glycerol 3-phosphate. This Escherichia coli O7:K1 (strain IAI39 / ExPEC) protein is Glycerol kinase.